A 337-amino-acid polypeptide reads, in one-letter code: Glyceraldehyde-3-phosphate dehydrogenase (337 aa).

NAD(+) contacts are provided by residues 12–13 (RI), D34, and R79. D-glyceraldehyde 3-phosphate is bound by residues 150 to 152 (SCT), T181, 210 to 211 (TG), and R233. C151 functions as the Nucleophile in the catalytic mechanism. NAD(+) is bound at residue N315.

The protein belongs to the glyceraldehyde-3-phosphate dehydrogenase family. As to quaternary structure, homotetramer.

It is found in the cytoplasm. The enzyme catalyses D-glyceraldehyde 3-phosphate + phosphate + NAD(+) = (2R)-3-phospho-glyceroyl phosphate + NADH + H(+). The protein operates within carbohydrate degradation; glycolysis; pyruvate from D-glyceraldehyde 3-phosphate: step 1/5. In Claviceps purpurea (strain 20.1) (Ergot fungus), this protein is Glyceraldehyde-3-phosphate dehydrogenase (GPD-1).